Here is a 220-residue protein sequence, read N- to C-terminus: Ribosome maturation factor RimP (220 aa).

Residues 173–220 (KKDKEERRQRKKARRRGEKGGVGDDGTAGEEQPDSAREGPARSASEGE) are disordered.

This sequence belongs to the RimP family.

It is found in the cytoplasm. Required for maturation of 30S ribosomal subunits. This chain is Ribosome maturation factor RimP, found in Chelativorans sp. (strain BNC1).